The sequence spans 329 residues: Probable cell division protein WhiA (329 aa).

The segment at residues 275–308 (SLEELGALADPPLTKDAVAGRIRRLLAMADKRAQ) is a DNA-binding region (H-T-H motif).

The protein belongs to the WhiA family.

Involved in cell division and chromosome segregation. The chain is Probable cell division protein WhiA from Streptomyces griseus subsp. griseus (strain JCM 4626 / CBS 651.72 / NBRC 13350 / KCC S-0626 / ISP 5235).